Reading from the N-terminus, the 141-residue chain is 3-hydroxyacyl-[acyl-carrier-protein] dehydratase FabZ (141 aa).

Residue His-47 is part of the active site.

The protein belongs to the thioester dehydratase family. FabZ subfamily.

It localises to the cytoplasm. The enzyme catalyses a (3R)-hydroxyacyl-[ACP] = a (2E)-enoyl-[ACP] + H2O. In terms of biological role, involved in unsaturated fatty acids biosynthesis. Catalyzes the dehydration of short chain beta-hydroxyacyl-ACPs and long chain saturated and unsaturated beta-hydroxyacyl-ACPs. This is 3-hydroxyacyl-[acyl-carrier-protein] dehydratase FabZ from Caldanaerobacter subterraneus subsp. tengcongensis (strain DSM 15242 / JCM 11007 / NBRC 100824 / MB4) (Thermoanaerobacter tengcongensis).